A 524-amino-acid polypeptide reads, in one-letter code: uncharacterized protein (524 aa).

The N-terminal stretch at 1-26 (MLKIDMWFKLKSLGFSLISLQALLAS) is a signal peptide. The N-palmitoyl cysteine moiety is linked to residue cysteine 27. Cysteine 27 is lipidated: S-diacylglycerol cysteine. The interval 37–68 (IEEKNDSTTDNNATPFKDEQSDQGTEVNQQPK) is disordered. Positions 58-68 (DQGTEVNQQPK) are enriched in polar residues.

The protein belongs to the MG067/MG068/MG395 family.

The protein resides in the cell membrane. This is an uncharacterized protein from Mycoplasma genitalium (strain ATCC 33530 / DSM 19775 / NCTC 10195 / G37) (Mycoplasmoides genitalium).